Consider the following 584-residue polypeptide: Arginine--tRNA ligase (584 aa).

The 'HIGH' region motif lies at 126-136 (PNIAKEMHVGH).

It belongs to the class-I aminoacyl-tRNA synthetase family. In terms of assembly, monomer.

The protein resides in the cytoplasm. It carries out the reaction tRNA(Arg) + L-arginine + ATP = L-arginyl-tRNA(Arg) + AMP + diphosphate. The protein is Arginine--tRNA ligase (argS) of Synechocystis sp. (strain ATCC 27184 / PCC 6803 / Kazusa).